The following is an 88-amino-acid chain: Putative membrane protein insertion efficiency factor (88 aa).

Residues 66 to 88 (DFVPPKKEKNADSEHSCKAHHHH) form a disordered region. The span at 69–82 (PPKKEKNADSEHSC) shows a compositional bias: basic and acidic residues.

The protein belongs to the UPF0161 family.

It localises to the cell membrane. In terms of biological role, could be involved in insertion of integral membrane proteins into the membrane. The sequence is that of Putative membrane protein insertion efficiency factor from Listeria monocytogenes serotype 4b (strain CLIP80459).